Reading from the N-terminus, the 258-residue chain is Regulatory protein RecX (258 aa).

It belongs to the RecX family.

It localises to the cytoplasm. Modulates RecA activity. This Streptococcus pneumoniae (strain Hungary19A-6) protein is Regulatory protein RecX.